The primary structure comprises 52 residues: Defensin D2 (52 aa).

4 disulfides stabilise this stretch: C8–C52, C19–C39, C25–C46, and C29–C48.

Distributed in the epidermal cell layer of leaves and in the subepidermal layer region of stems. Not in roots.

The protein localises to the secreted. It localises to the cell wall. Functionally, antimicrobial peptide. Active against Fusarium spp., Gram-positive and Gram-negative bacterial pathogens. This is Defensin D2 from Spinacia oleracea (Spinach).